A 512-amino-acid chain; its full sequence is Dihydroniloticin synthase CYP71CD2 (512 aa).

A helical transmembrane segment spans residues 1–21 (MNLQLDYFSITSFLVFLVVLF). Asn-436 is a binding site for heme.

The protein belongs to the cytochrome P450 family. It depends on heme as a cofactor. In terms of tissue distribution, mainly expressed in petioles and roots, and, to a lower extent, in leaves.

It localises to the membrane. The catalysed reaction is tirucalla-7,24-dien-3beta-ol + 2 reduced [NADPH--hemoprotein reductase] + 2 O2 = dihydroniloticin + 2 oxidized [NADPH--hemoprotein reductase] + 2 H2O + 2 H(+). It participates in secondary metabolite biosynthesis; terpenoid biosynthesis. Functionally, monooxygenase involved in the biosynthesis of limonoids triterpene natural products such as azadirachtin, an antifeedant widely used as bioinsecticide, and possessing many medicinal applications including anti-tumoral, anti-malarial, anti-rheumatic, antibacterial, anti-inflammatory, anti-pyretic and diuretic effects. Catalyzes the conversion of tirucalladienol to dihydroniloticin. The chain is Dihydroniloticin synthase CYP71CD2 from Melia azedarach (Chinaberry tree).